Reading from the N-terminus, the 374-residue chain is Queuine tRNA-ribosyltransferase (374 aa).

The active-site Proton acceptor is the Asp91. Residues 91 to 95 (DSGGY), Asp145, Gln189, and Gly216 contribute to the substrate site. The tract at residues 247–253 (GVGTVPD) is RNA binding. Asp266 serves as the catalytic Nucleophile. Positions 271 to 275 (TRNAR) are RNA binding; important for wobble base 34 recognition. Residues Cys304, Cys306, Cys309, and His335 each coordinate Zn(2+).

It belongs to the queuine tRNA-ribosyltransferase family. Homodimer. Within each dimer, one monomer is responsible for RNA recognition and catalysis, while the other monomer binds to the replacement base PreQ1. Requires Zn(2+) as cofactor.

It catalyses the reaction 7-aminomethyl-7-carbaguanine + guanosine(34) in tRNA = 7-aminomethyl-7-carbaguanosine(34) in tRNA + guanine. It functions in the pathway tRNA modification; tRNA-queuosine biosynthesis. Functionally, catalyzes the base-exchange of a guanine (G) residue with the queuine precursor 7-aminomethyl-7-deazaguanine (PreQ1) at position 34 (anticodon wobble position) in tRNAs with GU(N) anticodons (tRNA-Asp, -Asn, -His and -Tyr). Catalysis occurs through a double-displacement mechanism. The nucleophile active site attacks the C1' of nucleotide 34 to detach the guanine base from the RNA, forming a covalent enzyme-RNA intermediate. The proton acceptor active site deprotonates the incoming PreQ1, allowing a nucleophilic attack on the C1' of the ribose to form the product. After dissociation, two additional enzymatic reactions on the tRNA convert PreQ1 to queuine (Q), resulting in the hypermodified nucleoside queuosine (7-(((4,5-cis-dihydroxy-2-cyclopenten-1-yl)amino)methyl)-7-deazaguanosine). The chain is Queuine tRNA-ribosyltransferase from Leptospira borgpetersenii serovar Hardjo-bovis (strain JB197).